The sequence spans 444 residues: Protein phosphatase 2C homolog C10F6.17c (444 aa).

Positions 85–439 constitute a PPM-type phosphatase domain; the sequence is RYDFNQVASN…DDITVTVIFF (355 aa). Asp121, Gly122, and Asp344 together coordinate Mn(2+).

It belongs to the PP2C family. The cofactor is Mg(2+). Mn(2+) serves as cofactor.

It localises to the mitochondrion. The catalysed reaction is O-phospho-L-seryl-[protein] + H2O = L-seryl-[protein] + phosphate. It carries out the reaction O-phospho-L-threonyl-[protein] + H2O = L-threonyl-[protein] + phosphate. Its function is as follows. Involved in regulation of pyruvate dehydrogenase activity. The polypeptide is Protein phosphatase 2C homolog C10F6.17c (Schizosaccharomyces pombe (strain 972 / ATCC 24843) (Fission yeast)).